The sequence spans 301 residues: UDP-N-acetylenolpyruvoylglucosamine reductase (301 aa).

An FAD-binding PCMH-type domain is found at 24–190 (RVGGLAQFYD…VSAQLQLQPG (167 aa)). Residue arginine 169 is part of the active site. Serine 220 acts as the Proton donor in catalysis. Glutamate 290 is an active-site residue.

The protein belongs to the MurB family. The cofactor is FAD.

It is found in the cytoplasm. It carries out the reaction UDP-N-acetyl-alpha-D-muramate + NADP(+) = UDP-N-acetyl-3-O-(1-carboxyvinyl)-alpha-D-glucosamine + NADPH + H(+). The protein operates within cell wall biogenesis; peptidoglycan biosynthesis. Functionally, cell wall formation. This is UDP-N-acetylenolpyruvoylglucosamine reductase from Synechococcus sp. (strain ATCC 27144 / PCC 6301 / SAUG 1402/1) (Anacystis nidulans).